We begin with the raw amino-acid sequence, 363 residues long: Pyrimidine monooxygenase RutA (363 aa).

FMN-binding positions include 49–50 (IK), N115, E124, 140–141 (RY), and S190.

This sequence belongs to the NtaA/SnaA/DszA monooxygenase family. RutA subfamily.

The catalysed reaction is uracil + FMNH2 + NADH + O2 = (Z)-3-ureidoacrylate + FMN + NAD(+) + H2O + H(+). The enzyme catalyses thymine + FMNH2 + NADH + O2 = (Z)-2-methylureidoacrylate + FMN + NAD(+) + H2O + H(+). In terms of biological role, catalyzes the pyrimidine ring opening between N-3 and C-4 by an unusual flavin hydroperoxide-catalyzed mechanism, adding oxygen atoms in the process to yield ureidoacrylate peracid, that immediately reacts with FMN forming ureidoacrylate and FMN-N(5)-oxide. The FMN-N(5)-oxide reacts spontaneously with NADH to produce FMN. Requires the flavin reductase RutF to regenerate FMN in vivo. This is Pyrimidine monooxygenase RutA from Escherichia coli O127:H6 (strain E2348/69 / EPEC).